Reading from the N-terminus, the 1220-residue chain is Plasma membrane calcium-transporting ATPase 1 (1220 aa).

N-acetylglycine is present on Gly-2. At 2–105 the chain is on the cytoplasmic side; it reads GDMANNSVVY…KTFLQLVWEA (104 aa). Phosphoserine is present on residues Ser-8 and Ser-17. A helical membrane pass occupies residues 106–126; the sequence is LQDVTLIILEIAAIVSLGLSF. The Extracellular portion of the chain corresponds to 127–154; that stretch reads YQPPEGDNALCGEVSVGEEEGEGETGWI. A helical transmembrane segment spans residues 155 to 175; sequence EGAAILLSVVCVVLVTAFNDW. At 176–366 the chain is on the cytoplasmic side; sequence SKEKQFRGLQ…KEKSVLQGKL (191 aa). Residues 297–356 are disordered; the sequence is EEEKKDEKKKEKKNKKQDGAIENRNKAKAQDGEPMEMQPLKSEEGGDGDEKDKKKANLPK. 2 stretches are compositionally biased toward basic and acidic residues: residues 312 to 327 and 337 to 356; these read KQDGAIENRNKAKAQD and KSEEGGDGDEKDKKKANLPK. The residue at position 338 (Ser-338) is a Phosphoserine. The chain crosses the membrane as a helical span at residues 367-386; the sequence is TKLAVQIGKAGLLMSAITVI. Residues 387-418 are Extracellular-facing; it reads ILVLYFLIDTFWVQKRPWLAECTPIYIQYFVK. A helical membrane pass occupies residues 419–439; it reads FFIIGVTVLVVAVPEGLPLPV. Topologically, residues 440 to 855 are cytoplasmic; that stretch reads TISLAYSVNE…RNVYDSISKF (416 aa). The active-site 4-aspartylphosphate intermediate is Asp-475. 3 residues coordinate Mg(2+): Asp-475, Thr-477, and Asp-797. A helical transmembrane segment spans residues 856-876; the sequence is LQFQLTVNVVAVIVAFTGACI. Topologically, residues 877-882 are extracellular; it reads TQDSPL. The chain crosses the membrane as a helical span at residues 883 to 903; sequence KAVQMLWVNLIMDTLASLALA. At 904–927 the chain is on the cytoplasmic side; that stretch reads TEPPTESLLLGKPYGRNKPLISRT. A helical transmembrane segment spans residues 928–948; that stretch reads MMKNILGHAFYQLVVVFTLLL. Topologically, residues 949-971 are extracellular; that stretch reads AGEKFFDIDSGRNAPLHAPPSEH. A helical transmembrane segment spans residues 972–991; that stretch reads YTIVFNIFVLMQLFNEINAR. The Cytoplasmic portion of the chain corresponds to 992–1005; that stretch reads KIHGERNVFEGIFN. A helical membrane pass occupies residues 1006–1027; the sequence is NAIFCTIVLGTFVVQIIIVQFA. Residues 1028 to 1039 are Extracellular-facing; that stretch reads GKPFSCSELSVE. A helical membrane pass occupies residues 1040–1060; that stretch reads QWLWSIFLGMGTLLWGQLIST. The Cytoplasmic segment spans residues 1061 to 1220; that stretch reads IPTSRLKFQK…SPLHSLETSL (160 aa). The interval 1100 to 1117 is calmodulin-binding subdomain A; that stretch reads LRRWQILWFRGLNRIQTQ. Thr-1116 is subject to Phosphothreonine; by PKC. Residues 1118–1220 form a required for basolateral membrane targeting region; sequence IRVVNAFRSS…SPLHSLETSL (103 aa). Phosphoserine occurs at positions 1140 and 1155. Residues 1160-1220 are disordered; that stretch reads PLIDDTDAED…SPLHSLETSL (61 aa). Thr-1165 carries the phosphothreonine modification. Phosphoserine; by PKA is present on Ser-1177. Residues Ser-1178 and Ser-1182 each carry the phosphoserine modification. The span at 1200–1220 shows a compositional bias: polar residues; sequence MNKSATSSSPGSPLHSLETSL.

The protein belongs to the cation transport ATPase (P-type) (TC 3.A.3) family. Type IIB subfamily. As to quaternary structure, monomer. Dimer. Oligomer. Calmodulin binding. Interacts with PDZD11. Interacts with SLC35G1 and STIM1. Interacts with YWHAE; interacts with the monomeric and dimeric forms of the YWHAE but prefer the monomer form; this interaction inhibits calcium-transporting ATPase activity. Interacts with NPTN; this interaction stabilizes ATP2B1 and increases ATPase activity; this interaction controls T cell calcium homeostasis following T cell activation. Interacts with EPB41; regulates small intestinal calcium absorption through regulation of membrane expression of ATP2B1. Isoform B is ubiquitously expressed and is the most predominant isoform. Isoform C is expressed at much lower levels in all tissues tested, but liver, while isoform A is found only in aorta, brain and stomach.

The protein localises to the cell membrane. Its subcellular location is the basolateral cell membrane. The protein resides in the synapse. It localises to the presynaptic cell membrane. It is found in the cytoplasmic vesicle. The protein localises to the secretory vesicle. Its subcellular location is the synaptic vesicle membrane. The enzyme catalyses Ca(2+)(in) + ATP + H2O = Ca(2+)(out) + ADP + phosphate + H(+). Catalyzes the hydrolysis of ATP coupled with the transport of calcium from the cytoplasm to the extracellular space thereby maintaining intracellular calcium homeostasis. Plays a role in blood pressure regulation through regulation of intracellular calcium concentration and nitric oxide production leading to regulation of vascular smooth muscle cells vasoconstriction. Positively regulates bone mineralization through absorption of calcium from the intestine. Plays dual roles in osteoclast differentiation and survival by regulating RANKL-induced calcium oscillations in preosteoclasts and mediating calcium extrusion in mature osteoclasts. Regulates insulin sensitivity through calcium/calmodulin signaling pathway by regulating AKT1 activation and NOS3 activation in endothelial cells. May play a role in synaptic transmission by modulating calcium and proton dynamics at the synaptic vesicles. The sequence is that of Plasma membrane calcium-transporting ATPase 1 from Oryctolagus cuniculus (Rabbit).